Here is a 376-residue protein sequence, read N- to C-terminus: Alcohol dehydrogenase class-3 (376 aa).

7 residues coordinate Zn(2+): Cys-47, His-69, Cys-99, Cys-102, Cys-105, Cys-113, and Cys-176.

Belongs to the zinc-containing alcohol dehydrogenase family. Class-III subfamily. As to quaternary structure, homodimer. Zn(2+) serves as cofactor. As to expression, expressed in the skeletal muscle, heart, gill filaments and liver, with highest levels in the kidney.

It is found in the cytoplasm. It carries out the reaction a primary alcohol + NAD(+) = an aldehyde + NADH + H(+). It catalyses the reaction a secondary alcohol + NAD(+) = a ketone + NADH + H(+). The catalysed reaction is S-(hydroxymethyl)glutathione + NADP(+) = S-formylglutathione + NADPH + H(+). The enzyme catalyses S-(hydroxymethyl)glutathione + NAD(+) = S-formylglutathione + NADH + H(+). It carries out the reaction S-nitrosoglutathione + NADH + H(+) = S-(hydroxysulfenamide)glutathione + NAD(+). In terms of biological role, class-III ADH is remarkably ineffective in oxidizing ethanol, but it readily catalyzes the oxidation of long-chain primary alcohols and the oxidation of S-(hydroxymethyl) glutathione. Also acts as a S-nitroso-glutathione reductase by catalyzing the NADH-dependent reduction of S-nitrosoglutathione, thereby regulating protein S-nitrosylation. The polypeptide is Alcohol dehydrogenase class-3 (Sparus aurata (Gilthead sea bream)).